A 331-amino-acid polypeptide reads, in one-letter code: uncharacterized protein (331 aa).

This sequence belongs to the proline racemase family.

This is an uncharacterized protein from Bacillus anthracis.